Consider the following 221-residue polypeptide: Epididymal secretory glutathione peroxidase (221 aa).

A signal peptide spans 1-21 (MVTELRVFYLVPLLLASYVQT). The active site involves Cys73.

This sequence belongs to the glutathione peroxidase family. As to expression, epididymis.

It localises to the secreted. It catalyses the reaction 2 glutathione + H2O2 = glutathione disulfide + 2 H2O. In terms of biological role, protects cells and enzymes from oxidative damage, by catalyzing the reduction of hydrogen peroxide, lipid peroxides and organic hydroperoxide, by glutathione. May constitute a glutathione peroxidase-like protective system against peroxide damage in sperm membrane lipids. The protein is Epididymal secretory glutathione peroxidase (Gpx5) of Mus musculus (Mouse).